The chain runs to 440 residues: Putative epoxide hydrolase (440 aa).

The interval 1-21 is disordered; it reads MTKTLAEQPGEGAAPVSPSPS. A signal peptide (tat-type signal) is located at residues 1–49; it reads MTKTLAEQPGEGAAPVSPSPSRRALLHGAAGLGALAAGAAVAGPGLAFA.

Belongs to the peptidase S33 family. In terms of processing, predicted to be exported by the Tat system. The position of the signal peptide cleavage has not been experimentally proven.

The enzyme catalyses an epoxide + H2O = an ethanediol. This chain is Putative epoxide hydrolase, found in Stigmatella aurantiaca (strain DW4/3-1).